We begin with the raw amino-acid sequence, 269 residues long: Shikimate dehydrogenase (NADP(+)) (269 aa).

Shikimate is bound by residues 14–16 (SVS) and Thr-61. Catalysis depends on Lys-65, which acts as the Proton acceptor. Asn-85 and Asp-98 together coordinate shikimate. NADP(+) is bound by residues 120–124 (GAGGA), 143–148 (NRTEEK), and Thr-211. Tyr-213 serves as a coordination point for shikimate. Position 234 (Gly-234) interacts with NADP(+).

This sequence belongs to the shikimate dehydrogenase family. Homodimer.

It catalyses the reaction shikimate + NADP(+) = 3-dehydroshikimate + NADPH + H(+). It participates in metabolic intermediate biosynthesis; chorismate biosynthesis; chorismate from D-erythrose 4-phosphate and phosphoenolpyruvate: step 4/7. Involved in the biosynthesis of the chorismate, which leads to the biosynthesis of aromatic amino acids. Catalyzes the reversible NADPH linked reduction of 3-dehydroshikimate (DHSA) to yield shikimate (SA). The polypeptide is Shikimate dehydrogenase (NADP(+)) (Archaeoglobus fulgidus (strain ATCC 49558 / DSM 4304 / JCM 9628 / NBRC 100126 / VC-16)).